Consider the following 634-residue polypeptide: Carbon monoxide dehydrogenase 2 (634 aa).

[4Fe-4S] cluster-binding residues include Cys44, Cys53, Cys56, Cys61, and Cys73. Residues His264, Cys343, Cys453, Cys484, and Cys525 each contribute to the [Ni-4Fe-5S] cluster site.

Belongs to the Ni-containing carbon monoxide dehydrogenase family. As to quaternary structure, homodimer. Requires [4Fe-4S] cluster as cofactor. [Ni-4Fe-5S] cluster is required as a cofactor.

The enzyme catalyses CO + 2 oxidized [2Fe-2S]-[ferredoxin] + H2O = 2 reduced [2Fe-2S]-[ferredoxin] + CO2 + 2 H(+). CODH oxidizes carbon monoxide coupled, via CooF, to the reduction of a hydrogen cation by a hydrogenase (possibly CooH). The polypeptide is Carbon monoxide dehydrogenase 2 (cooS2) (Methanosarcina mazei (strain ATCC BAA-159 / DSM 3647 / Goe1 / Go1 / JCM 11833 / OCM 88) (Methanosarcina frisia)).